Here is a 96-residue protein sequence, read N- to C-terminus: Teretoxin Tan6.14 (96 aa).

Positions 1-21 (MRPLLVFVLMVSVSLAFSLEG) are cleaved as a signal peptide. Residues 22–60 (MPNNGGDSVASITANQARRFKRNPLFSFAQHSLVDLKAR) constitute a propeptide that is removed on maturation.

Post-translationally, contains 3 disulfide bonds. As to expression, expressed by the venom duct.

Its subcellular location is the secreted. The sequence is that of Teretoxin Tan6.14 from Terebra anilis (Auger snail).